The primary structure comprises 291 residues: MFEGVLPALITPFTKDDTIDRTGLIKNIEFAENGKVTGVVVCGTTGESATLSTAEHMEVIDIAVECANVPVVAGTGSNNTAEAVELTKHAEEAGASGALVISPYYNKPNKAGLISHFRTIAEAVEIPIVLYNVPSRTGQDISLEVITELAKIDNIVGIKEASGNLDKASQIIENTMDEDFKVTSGDDGLTLPIMSIGGCGVISVVANIVPDRMSRLVNAFNEGDTATAQQLHYEIAPLIRALFTETNPVPIKRAMNLVGLNAGHLRPPLAPISAENNKLLANCLKELGCLQ.

Threonine 45 is a binding site for pyruvate. Tyrosine 131 (proton donor/acceptor) is an active-site residue. The Schiff-base intermediate with substrate role is filled by lysine 159. Isoleucine 202 contacts pyruvate.

Belongs to the DapA family. Homotetramer; dimer of dimers.

The protein localises to the cytoplasm. The enzyme catalyses L-aspartate 4-semialdehyde + pyruvate = (2S,4S)-4-hydroxy-2,3,4,5-tetrahydrodipicolinate + H2O + H(+). The protein operates within amino-acid biosynthesis; L-lysine biosynthesis via DAP pathway; (S)-tetrahydrodipicolinate from L-aspartate: step 3/4. In terms of biological role, catalyzes the condensation of (S)-aspartate-beta-semialdehyde [(S)-ASA] and pyruvate to 4-hydroxy-tetrahydrodipicolinate (HTPA). The sequence is that of 4-hydroxy-tetrahydrodipicolinate synthase from Methanococcoides burtonii (strain DSM 6242 / NBRC 107633 / OCM 468 / ACE-M).